A 146-amino-acid polypeptide reads, in one-letter code: Putative actin-depolymerizing factor 8 (146 aa).

Residues 14–144 enclose the ADF-H domain; it reads PAWIEVPEKS…DLEVLRGRAN (131 aa).

This sequence belongs to the actin-binding proteins ADF family.

Functionally, actin-depolymerizing protein. Severs actin filaments (F-actin) and binds to actin monomers. This Oryza sativa subsp. japonica (Rice) protein is Putative actin-depolymerizing factor 8 (ADF8).